The following is a 368-amino-acid chain: Histidinol-phosphate aminotransferase (368 aa).

Residue Lys-229 is modified to N6-(pyridoxal phosphate)lysine.

Belongs to the class-II pyridoxal-phosphate-dependent aminotransferase family. Histidinol-phosphate aminotransferase subfamily. As to quaternary structure, homodimer. The cofactor is pyridoxal 5'-phosphate.

The enzyme catalyses L-histidinol phosphate + 2-oxoglutarate = 3-(imidazol-4-yl)-2-oxopropyl phosphate + L-glutamate. It participates in amino-acid biosynthesis; L-histidine biosynthesis; L-histidine from 5-phospho-alpha-D-ribose 1-diphosphate: step 7/9. The chain is Histidinol-phosphate aminotransferase from Acidovorax ebreus (strain TPSY) (Diaphorobacter sp. (strain TPSY)).